The following is a 438-amino-acid chain: Histidinol dehydrogenase (438 aa).

Residues Tyr137, Gln198, and Asn221 each coordinate NAD(+). Ser244, Gln266, and His269 together coordinate substrate. The Zn(2+) site is built by Gln266 and His269. Catalysis depends on proton acceptor residues Glu334 and His335. Residues His335, Asp368, Glu422, and His427 each contribute to the substrate site. Asp368 contacts Zn(2+). His427 serves as a coordination point for Zn(2+).

This sequence belongs to the histidinol dehydrogenase family. The cofactor is Zn(2+).

It catalyses the reaction L-histidinol + 2 NAD(+) + H2O = L-histidine + 2 NADH + 3 H(+). The protein operates within amino-acid biosynthesis; L-histidine biosynthesis; L-histidine from 5-phospho-alpha-D-ribose 1-diphosphate: step 9/9. In terms of biological role, catalyzes the sequential NAD-dependent oxidations of L-histidinol to L-histidinaldehyde and then to L-histidine. The protein is Histidinol dehydrogenase of Aromatoleum aromaticum (strain DSM 19018 / LMG 30748 / EbN1) (Azoarcus sp. (strain EbN1)).